A 351-amino-acid polypeptide reads, in one-letter code: Phosphoribosylformylglycinamidine cyclo-ligase (351 aa).

This sequence belongs to the AIR synthase family.

It is found in the cytoplasm. It carries out the reaction 2-formamido-N(1)-(5-O-phospho-beta-D-ribosyl)acetamidine + ATP = 5-amino-1-(5-phospho-beta-D-ribosyl)imidazole + ADP + phosphate + H(+). It functions in the pathway purine metabolism; IMP biosynthesis via de novo pathway; 5-amino-1-(5-phospho-D-ribosyl)imidazole from N(2)-formyl-N(1)-(5-phospho-D-ribosyl)glycinamide: step 2/2. This is Phosphoribosylformylglycinamidine cyclo-ligase from Burkholderia ambifaria (strain ATCC BAA-244 / DSM 16087 / CCUG 44356 / LMG 19182 / AMMD) (Burkholderia cepacia (strain AMMD)).